A 275-amino-acid polypeptide reads, in one-letter code: Gamma carbonic anhydrase 1, mitochondrial (275 aa).

A mitochondrion-targeting transit peptide spans 1-43; sequence MGTLGRAFYSVGFWIRETGQALDRLGCRLQGKNYFREQLSRHR. Residues 86-88 and 101-102 contribute to the substrate site; these read RGD and QD. Residues histidine 107, histidine 130, and histidine 135 each contribute to the Zn(2+) site. Position 209 (asparagine 209) interacts with substrate. Residues 256–275 form a disordered region; it reads LNLPNNILPDKETKRPSNVN. Residues 264 to 275 are compositionally biased toward basic and acidic residues; the sequence is PDKETKRPSNVN.

The protein belongs to the gamma-class carbonic anhydrase family. Homotrimer. Component of the mitochondrial oxidoreductase respiratory chain complex I; element of the extra matrix-exposed domain, which is attached to the membrane arm of this complex. Zn(2+) serves as cofactor.

It localises to the mitochondrion membrane. Functionally, enzyme involved in the catabolism of H(2)CO(3) but that does not mediates the reversible hydration of carbon dioxide. Mediates complex I assembly in mitochondria and respiration. This Arabidopsis thaliana (Mouse-ear cress) protein is Gamma carbonic anhydrase 1, mitochondrial (GAMMACA1).